Here is a 148-residue protein sequence, read N- to C-terminus: MKLDIKILDPRMREQLPAYATTGSAGLDLRACLDAPLTLEPGQTVLVPTGLAIHLADPGYAALILPRSGMGHKHGIVLGNLVGLIDSDYQGQLMISTWNRGTTTFTLNPMERLAQLVIVPVVQATFNIVDEFDTSERGEGGFGSTGKH.

Substrate contacts are provided by residues 67 to 69 (RSG), Asn80, 84 to 86 (LID), and Met94.

Belongs to the dUTPase family. Mg(2+) serves as cofactor.

The catalysed reaction is dUTP + H2O = dUMP + diphosphate + H(+). Its pathway is pyrimidine metabolism; dUMP biosynthesis; dUMP from dCTP (dUTP route): step 2/2. This enzyme is involved in nucleotide metabolism: it produces dUMP, the immediate precursor of thymidine nucleotides and it decreases the intracellular concentration of dUTP so that uracil cannot be incorporated into DNA. The protein is Deoxyuridine 5'-triphosphate nucleotidohydrolase of Paraburkholderia phymatum (strain DSM 17167 / CIP 108236 / LMG 21445 / STM815) (Burkholderia phymatum).